The chain runs to 404 residues: Multidrug resistance protein MdtG (404 aa).

A run of 11 helical transmembrane segments spans residues 19 to 39 (LGCF…PLYV), 56 to 76 (LVFS…GGLA), 90 to 110 (LGMA…QFLI), 113 to 133 (ALLG…ATQV), 144 to 164 (TLST…GLLA), 171 to 191 (PVFF…FFFI), 222 to 242 (LFVT…ILTL), 254 to 274 (IAFI…LSAP), 288 to 308 (ILIV…FVQT), 317 to 337 (FLLG…LVYN), and 376 to 396 (AVFC…WNSL).

It belongs to the major facilitator superfamily. DHA1 family. MdtG (TC 2.A.1.2.20) subfamily.

It localises to the cell inner membrane. The sequence is that of Multidrug resistance protein MdtG from Salmonella dublin (strain CT_02021853).